Reading from the N-terminus, the 95-residue chain is Small ribosomal subunit protein uS19 (95 aa).

The protein belongs to the universal ribosomal protein uS19 family.

Protein S19 forms a complex with S13 that binds strongly to the 16S ribosomal RNA. In Thermosipho africanus (strain TCF52B), this protein is Small ribosomal subunit protein uS19.